The primary structure comprises 91 residues: UPF0512 protein F (91 aa).

This sequence belongs to the UPF0512 family.

This Dictyostelium discoideum (Social amoeba) protein is UPF0512 protein F.